Reading from the N-terminus, the 396-residue chain is Elongation factor Tu (396 aa).

The tr-type G domain maps to 10 to 206; sequence KLHVNVGTIG…ALDTHIPNPE (197 aa). The G1 stretch occupies residues 19–26; that stretch reads GHVDHGKT. GTP is bound at residue 19 to 26; that stretch reads GHVDHGKT. T26 contacts Mg(2+). A G2 region spans residues 60 to 64; the sequence is GITIS. Positions 81–84 are G3; sequence DCPG. GTP contacts are provided by residues 81-85 and 136-139; these read DCPGH and NKAD. Positions 136 to 139 are G4; that stretch reads NKAD. The G5 stretch occupies residues 174–176; that stretch reads SAL.

Belongs to the TRAFAC class translation factor GTPase superfamily. Classic translation factor GTPase family. EF-Tu/EF-1A subfamily. As to quaternary structure, monomer.

Its subcellular location is the cytoplasm. It carries out the reaction GTP + H2O = GDP + phosphate + H(+). In terms of biological role, GTP hydrolase that promotes the GTP-dependent binding of aminoacyl-tRNA to the A-site of ribosomes during protein biosynthesis. The protein is Elongation factor Tu of Xylella fastidiosa (strain 9a5c).